The following is a 131-amino-acid chain: Single-stranded DNA-binding protein 1 (131 aa).

The 103-residue stretch at 1–103 (MYNKVIAIGR…VLCQSFQLLE (103 aa)) folds into the SSB domain.

Homotetramer.

This chain is Single-stranded DNA-binding protein 1 (ssb1), found in Streptococcus pyogenes serotype M6 (strain ATCC BAA-946 / MGAS10394).